The chain runs to 298 residues: Ribosomal RNA small subunit methyltransferase A (298 aa).

6 residues coordinate S-adenosyl-L-methionine: N35, L37, G62, E83, D108, and N133.

This sequence belongs to the class I-like SAM-binding methyltransferase superfamily. rRNA adenine N(6)-methyltransferase family. RsmA subfamily.

It localises to the cytoplasm. The enzyme catalyses adenosine(1518)/adenosine(1519) in 16S rRNA + 4 S-adenosyl-L-methionine = N(6)-dimethyladenosine(1518)/N(6)-dimethyladenosine(1519) in 16S rRNA + 4 S-adenosyl-L-homocysteine + 4 H(+). Specifically dimethylates two adjacent adenosines (A1518 and A1519) in the loop of a conserved hairpin near the 3'-end of 16S rRNA in the 30S particle. May play a critical role in biogenesis of 30S subunits. This chain is Ribosomal RNA small subunit methyltransferase A, found in Streptococcus pyogenes serotype M12 (strain MGAS9429).